The sequence spans 268 residues: Ribonuclease P protein subunit p30 (268 aa).

The residue at position 2 (A2) is an N-acetylalanine. The interval K247–G268 is disordered. Position 251 is a phosphoserine (S251).

It belongs to the eukaryotic/archaeal RNase P protein component 3 family. Component of nuclear RNase P and RNase MRP ribonucleoproteins. RNase P consists of a catalytic RNA moiety and about 10 protein subunits; POP1, POP4, POP5, POP7, RPP14, RPP21, RPP25, RPP30, RPP38 and RPP40. Within the RNase P complex, POP1, POP7 and RPP25 form the 'finger' subcomplex, POP5, RPP14, RPP40 and homodimeric RPP30 form the 'palm' subcomplex, and RPP21, POP4 and RPP38 form the 'wrist' subcomplex. All subunits of the RNase P complex interact with the catalytic RNA. Several subunits of RNase P are also part of the RNase MRP complex. RNase MRP consists of a catalytic RNA moiety and about 8 protein subunits; POP1, POP7, RPP25, RPP30, RPP38, RPP40 and possibly also POP4 and POP5.

Its subcellular location is the nucleus. The protein resides in the nucleolus. Functionally, component of ribonuclease P, a ribonucleoprotein complex that generates mature tRNA molecules by cleaving their 5'-ends. Also a component of the MRP ribonuclease complex, which cleaves pre-rRNA sequences. This is Ribonuclease P protein subunit p30 (RPP30) from Homo sapiens (Human).